The primary structure comprises 156 residues: Ribosomal RNA large subunit methyltransferase H (156 aa).

Residues glycine 104 and 123–128 (LSAMTL) each bind S-adenosyl-L-methionine.

This sequence belongs to the RNA methyltransferase RlmH family. As to quaternary structure, homodimer.

The protein localises to the cytoplasm. It carries out the reaction pseudouridine(1915) in 23S rRNA + S-adenosyl-L-methionine = N(3)-methylpseudouridine(1915) in 23S rRNA + S-adenosyl-L-homocysteine + H(+). Specifically methylates the pseudouridine at position 1915 (m3Psi1915) in 23S rRNA. In Chromobacterium violaceum (strain ATCC 12472 / DSM 30191 / JCM 1249 / CCUG 213 / NBRC 12614 / NCIMB 9131 / NCTC 9757 / MK), this protein is Ribosomal RNA large subunit methyltransferase H.